The primary structure comprises 152 residues: UPF0266 membrane protein YobD (152 aa).

3 helical membrane-spanning segments follow: residues 6–26, 45–65, and 67–87; these read LVLI…QFIM, IDSV…VTNH, and ALIT…IFWI.

This sequence belongs to the UPF0266 family.

It localises to the cell inner membrane. The chain is UPF0266 membrane protein YobD from Escherichia coli O157:H7 (strain EC4115 / EHEC).